Here is a 1085-residue protein sequence, read N- to C-terminus: DNA polymerase (1085 aa).

Residues 1059 to 1085 (YDQKRPNPRPQEPLLENPFWDDSSQTA) are disordered.

The protein belongs to the DNA polymerase type-B family. As to quaternary structure, heterodimer with the terminal protein; this heterodimer binds to bp 9 to 18 of the genome. Forms a complex with viral pTP, DBP and hosts NFIA and POU2F1/OCT1 for initiation of replication.

The protein localises to the host nucleus. The enzyme catalyses DNA(n) + a 2'-deoxyribonucleoside 5'-triphosphate = DNA(n+1) + diphosphate. Its function is as follows. Eukaryotic-type DNA polymerase involved in viral genomic replication. DNA synthesis is protein primed, and acts in a strand displacement replication. Functionally, eukaryotic-type DNA polymerase involved in viral genomic replication. DNA synthesis is protein primed, and acts in a strand displacement replication. Assembles in complex with viral pTP, DBP, host NFIA and host POU2F1/OCT1 on viral origin of replication. The polymerase covalently transfers dCMP onto pTP, thereby initiating complementary strand synthesis. The protein is DNA polymerase of Pantherophis guttatus (Corn snake).